A 658-amino-acid chain; its full sequence is Glycogen debranching enzyme (658 aa).

Asp336 serves as the catalytic Nucleophile. The active-site Proton donor is the Glu371. Positions Glu459 to Gly484 are disordered.

The protein belongs to the glycosyl hydrolase 13 family.

It catalyses the reaction Hydrolysis of (1-&gt;6)-alpha-D-glucosidic linkages to branches with degrees of polymerization of three or four glucose residues in limit dextrin.. It functions in the pathway glycan degradation; glycogen degradation. Removes maltotriose and maltotetraose chains that are attached by 1,6-alpha-linkage to the limit dextrin main chain, generating a debranched limit dextrin. In Salmonella dublin (strain CT_02021853), this protein is Glycogen debranching enzyme.